The sequence spans 276 residues: Putative ankyrin repeat protein R838 (276 aa).

4 ANK repeats span residues 134–163, 164–193, 195–223, and 225–253; these read DGDNALLMAAENGYYEVVTYLINKGCDPRS, DYDYALRSAAEKGHIDVVKLLLEKGADISS, NHWPLSYAALEGKFEMVKFLISRGADVRA, and NYNPIKYALDGGHREIADYMLDLCPEIGS. Residues 254–276 form a disordered region; the sequence is VSDDDTYDSDSSDYSEDDSESIN. Positions 255–276 are enriched in acidic residues; it reads SDDDTYDSDSSDYSEDDSESIN.

The polypeptide is Putative ankyrin repeat protein R838 (Acanthamoeba polyphaga (Amoeba)).